A 512-amino-acid chain; its full sequence is Glutathione-binding protein GsiB (512 aa).

Positions 1-26 are cleaved as a signal peptide; sequence MARAVHRSGLVALGIATALMASCAFA.

This sequence belongs to the bacterial solute-binding protein 5 family. As to quaternary structure, the complex is composed of two ATP-binding proteins (GsiA), two transmembrane proteins (GsiC and GsiD) and a solute-binding protein (GsiB).

It is found in the periplasm. Its function is as follows. Part of the ABC transporter complex GsiABCD involved in glutathione import. Binds glutathione. The protein is Glutathione-binding protein GsiB of Escherichia coli O1:K1 / APEC.